A 299-amino-acid chain; its full sequence is UDP-N-acetylenolpyruvoylglucosamine reductase (299 aa).

The 166-residue stretch at 28–193 (IGGPVDLMVL…VSALMQLHKE (166 aa)) folds into the FAD-binding PCMH-type domain. The active site involves R172. S222 (proton donor) is an active-site residue. E292 is a catalytic residue.

It belongs to the MurB family. FAD serves as cofactor.

Its subcellular location is the cytoplasm. The enzyme catalyses UDP-N-acetyl-alpha-D-muramate + NADP(+) = UDP-N-acetyl-3-O-(1-carboxyvinyl)-alpha-D-glucosamine + NADPH + H(+). It participates in cell wall biogenesis; peptidoglycan biosynthesis. Functionally, cell wall formation. This is UDP-N-acetylenolpyruvoylglucosamine reductase from Syntrophomonas wolfei subsp. wolfei (strain DSM 2245B / Goettingen).